A 548-amino-acid polypeptide reads, in one-letter code: MATKLIKHGSKAREQMLEGIDVLADAVKVTLGPKGRNVLIEQSFGSPKITKDGVTVAKSIELKDKIRNAGAQLLKSAATKAAEVAGDGTTTATVLARALAREGNKLVAAGYNPMDLKRGMDLAVNAVVEEIKKSSKKINSQEEIAQVGTISSNGDKEIGEKIAKAMEEVGKEGVITVEEAKNFSFDVEVVKGMMFDRGYLSPYFVTNSEKMVAELENPFILLFEKKLSNLQPMLPILEAVVQSQRPLLIIAEDVEGEALATLVVNRLRGGLKVAAVKAPGFGDRRKAMMEDIAILTKGELITEDLGMKLENVSIKSLGTAKRVTVSKENTVIVDGSGDKKNIEDRVLQIKSQIAETTSDYDKEKLQERLAKLSGGVAVLKVGGATEVEVKERKDRVEDALAATRAAVEEGVVAGGGVTLLHASQTLTKLKVENKDQQAGIEIVIEALKDPLKQIIENAGENGGVVVGKLLEHNDKNYGFNAQDMQYVDMIKAGIIDPAKVVRTALQDAASVASLIITTETLIVDEPSDKEDAMPPMRGGMGGMGGMDF.

ATP-binding positions include 30 to 33 (TLGP), lysine 51, 87 to 91 (DGTTT), glycine 415, and aspartate 496. A disordered region spans residues 527–548 (SDKEDAMPPMRGGMGGMGGMDF). The span at 538 to 548 (GGMGGMGGMDF) shows a compositional bias: gly residues.

Belongs to the chaperonin (HSP60) family. In terms of assembly, forms a cylinder of 14 subunits composed of two heptameric rings stacked back-to-back. Interacts with the co-chaperonin GroES.

The protein localises to the cytoplasm. It carries out the reaction ATP + H2O + a folded polypeptide = ADP + phosphate + an unfolded polypeptide.. Its function is as follows. Together with its co-chaperonin GroES, plays an essential role in assisting protein folding. The GroEL-GroES system forms a nano-cage that allows encapsulation of the non-native substrate proteins and provides a physical environment optimized to promote and accelerate protein folding. The sequence is that of Chaperonin GroEL from Rickettsia akari (strain Hartford).